A 419-amino-acid chain; its full sequence is Transcription termination factor Rho (419 aa).

The 76-residue stretch at 48–123 (GFTCSGTLEI…VRLDSINGDH (76 aa)) folds into the Rho RNA-BD domain. ATP contacts are provided by residues 169 to 174 (GKGQRA), 181 to 186 (KIGKTV), and arginine 212.

It belongs to the Rho family. In terms of assembly, homohexamer. The homohexamer assembles into an open ring structure.

Its function is as follows. Facilitates transcription termination by a mechanism that involves Rho binding to the nascent RNA, activation of Rho's RNA-dependent ATPase activity, and release of the mRNA from the DNA template. The chain is Transcription termination factor Rho from Neisseria gonorrhoeae.